A 474-amino-acid chain; its full sequence is Glycogen synthase (474 aa).

Lys12 serves as a coordination point for ADP-alpha-D-glucose.

Belongs to the glycosyltransferase 1 family. Bacterial/plant glycogen synthase subfamily.

It carries out the reaction [(1-&gt;4)-alpha-D-glucosyl](n) + ADP-alpha-D-glucose = [(1-&gt;4)-alpha-D-glucosyl](n+1) + ADP + H(+). The protein operates within glycan biosynthesis; glycogen biosynthesis. Its function is as follows. Synthesizes alpha-1,4-glucan chains using ADP-glucose. The polypeptide is Glycogen synthase (Xanthomonas campestris pv. campestris (strain 8004)).